A 132-amino-acid polypeptide reads, in one-letter code: Small ribosomal subunit protein uS11 (132 aa).

The segment at 1 to 24 is disordered; that stretch reads MAAPKQAARKPRRRDRKSVPVGQA. Residues 7-16 show a composition bias toward basic residues; sequence AARKPRRRDR.

It belongs to the universal ribosomal protein uS11 family. In terms of assembly, part of the 30S ribosomal subunit. Interacts with proteins S7 and S18. Binds to IF-3.

In terms of biological role, located on the platform of the 30S subunit, it bridges several disparate RNA helices of the 16S rRNA. Forms part of the Shine-Dalgarno cleft in the 70S ribosome. The sequence is that of Small ribosomal subunit protein uS11 from Bifidobacterium longum (strain DJO10A).